The sequence spans 89 residues: Small ribosomal subunit protein uS15 (89 aa).

Belongs to the universal ribosomal protein uS15 family. In terms of assembly, part of the 30S ribosomal subunit. Forms a bridge to the 50S subunit in the 70S ribosome, contacting the 23S rRNA.

In terms of biological role, one of the primary rRNA binding proteins, it binds directly to 16S rRNA where it helps nucleate assembly of the platform of the 30S subunit by binding and bridging several RNA helices of the 16S rRNA. Its function is as follows. Forms an intersubunit bridge (bridge B4) with the 23S rRNA of the 50S subunit in the ribosome. The chain is Small ribosomal subunit protein uS15 from Frankia alni (strain DSM 45986 / CECT 9034 / ACN14a).